Consider the following 486-residue polypeptide: MSNDTSAQPAQSSLSFTQGLLVGQLSVVLLIGAFIKFFIFGEASPSSSRSQTRRTSPHKRSYSISGARDLGSRSLKEKPSSNVLRPVPSSSTNTRSILRKTYYSANPTNFTSKHGRHRPHHSTHQPESLDWFNVLIAQTIAQYRQTAYILKDSPTSSILESLATTLNNPEKKPSFIDDITVTDISLGEEFPIFSNCRVIAIDDPSSDGGRLQALMDVDLSDDNLSLAIETNLVLNYPKPYSAILPVALSVSVVRFSGTLCISFVPGTTQTSTHLATSPSNIDPTLQTNDYSGANRRGNRRQERTDTEQATQANNAGTTGIPKTSLAFSFLPDYRLDLSVRSLIGSRSRLQDVPKVAQLVEARVQAWFEERVVEPRVQVVALPGIWPRMGRTGVRGQEEQQEVGSSGNAGVSTANVSMLGARDAGAEGSHATRDADMEGLRYRRNASPGDETSGVRYSPQNQDSREQACRDDPFRIPGSLPDVVPVT.

Over 1 to 19 (MSNDTSAQPAQSSLSFTQG) the chain is Lumenal. A helical membrane pass occupies residues 20 to 40 (LLVGQLSVVLLIGAFIKFFIF). Residues 41 to 486 (GEASPSSSRS…GSLPDVVPVT (446 aa)) lie on the Cytoplasmic side of the membrane. Disordered regions lie at residues 45-98 (PSSS…RSIL), 269-318 (QTST…AGTT), 393-412 (VRGQEEQQEVGSSGNAGVST), and 420-486 (ARDA…VPVT). Residues 51–61 (QTRRTSPHKRS) show a composition bias toward basic residues. A compositionally biased stretch (basic and acidic residues) spans 70–79 (LGSRSLKEKP). Composition is skewed to polar residues over residues 80 to 96 (SSNVLRPVPSSSTNTRS), 269 to 291 (QTSTHLATSPSNIDPTLQTNDYS), 307 to 318 (EQATQANNAGTT), and 401 to 412 (EVGSSGNAGVST). One can recognise an SMP-LTD domain in the interval 125–382 (QPESLDWFNV…EPRVQVVALP (258 aa)). 2 stretches are compositionally biased toward basic and acidic residues: residues 429–440 (HATRDADMEGLR) and 462–473 (DSREQACRDDPF).

It belongs to the MMM1 family. Homodimer. Component of the ER-mitochondria encounter structure (ERMES) or MDM complex, composed of MMM1, MDM10, MDM12 and MDM34. An MMM1 homodimer associates with one molecule of MDM12 on each side in a pairwise head-to-tail manner, and the SMP-LTD domains of MMM1 and MDM12 generate a continuous hydrophobic tunnel for phospholipid trafficking.

The protein resides in the endoplasmic reticulum membrane. Component of the ERMES/MDM complex, which serves as a molecular tether to connect the endoplasmic reticulum (ER) and mitochondria. Components of this complex are involved in the control of mitochondrial shape and protein biogenesis, and function in nonvesicular lipid trafficking between the ER and mitochondria. The MDM12-MMM1 subcomplex functions in the major beta-barrel assembly pathway that is responsible for biogenesis of all outer membrane beta-barrel proteins, and acts in a late step after the SAM complex. The MDM10-MDM12-MMM1 subcomplex further acts in the TOM40-specific pathway after the action of the MDM12-MMM1 complex. Essential for establishing and maintaining the structure of mitochondria and maintenance of mtDNA nucleoids. The protein is Maintenance of mitochondrial morphology protein 1 of Coccidioides immitis (strain RS) (Valley fever fungus).